Consider the following 307-residue polypeptide: Agmatinase (307 aa).

Mn(2+) contacts are provided by His128, Asp151, His153, Asp155, Asp232, and Asp234.

It belongs to the arginase family. Agmatinase subfamily. It depends on Mn(2+) as a cofactor.

It carries out the reaction agmatine + H2O = urea + putrescine. It participates in amine and polyamine biosynthesis; putrescine biosynthesis via agmatine pathway; putrescine from agmatine: step 1/1. Its function is as follows. Catalyzes the formation of putrescine from agmatine. This chain is Agmatinase, found in Neisseria gonorrhoeae (strain ATCC 700825 / FA 1090).